Consider the following 495-residue polypeptide: Transcription termination/antitermination protein NusA (495 aa).

The S1 motif domain maps to 135 to 200 (GQIITGIVKK…RGAQLFLSRS (66 aa)). The 69-residue stretch at 302 to 370 (HHTMDIAVDS…KNLNVSEKVI (69 aa)) folds into the KH domain. A run of 2 repeats spans residues 364–414 (NVSE…KNGL) and 439–489 (GMNE…RNIC). The segment at 364 to 489 (NVSEKVIKTL…LLIMAARNIC (126 aa)) is 2 X 51 AA approximate repeats.

It belongs to the NusA family. Monomer. Binds directly to the core enzyme of the DNA-dependent RNA polymerase and to nascent RNA.

The protein resides in the cytoplasm. Functionally, participates in both transcription termination and antitermination. This Buchnera aphidicola subsp. Schizaphis graminum (strain Sg) protein is Transcription termination/antitermination protein NusA.